A 485-amino-acid chain; its full sequence is WD repeat-containing protein 13 (485 aa).

3 positions are modified to phosphoserine: Ser70, Ser74, and Ser79. Arg114 is subject to Asymmetric dimethylarginine; alternate. Position 114 is an omega-N-methylarginine; alternate (Arg114). WD repeat units follow at residues 170-210, 215-254, 302-341, 406-446, and 451-484; these read HVDE…PTVL, GHTR…CIRE, KLTG…GKLT, HPVR…KAAV, and GHSA…RREQ.

It localises to the nucleus. In Pongo abelii (Sumatran orangutan), this protein is WD repeat-containing protein 13 (WDR13).